The chain runs to 334 residues: MYLCLESLQKSEFANQRWSLVDTSIETFKAPPENTLKKRGQHVTVIYDQNAMNSMVYTLWKEVYYVDETETWHKTSSDLDYDGIFYIDNQGNKIYYVNFQDDAALYSNSGMGQVHFESKVLSPSVTSSLRVGSTGGQRGTQTGDHARGRSRPSPRSSRDARGRQQRAQSSSRSRSRSRSRSPTKGPHSSGRDTRLPSPGRPPGGRRRGTPERERCPGTPTPPTPDQVGGRSSTPKRQASSRLAQLIDAAYDPPVLLLQGAANTLKCFRRRATQAHPHKFLCMSTSWTWVSKTSPLKSGHRMLIAFSNSEQRNCFLASVRLPKGVSAVKGALDGL.

The transactivation domain stretch occupies residues 1–127; that stretch reads MYLCLESLQK…SKVLSPSVTS (127 aa). Residues 127-240 are disordered; that stretch reads SSLRVGSTGG…SSTPKRQASS (114 aa). A compositionally biased stretch (polar residues) spans 229–240; that stretch reads GRSSTPKRQASS. Positions 251-334 are DNA-binding domain; that stretch reads DPPVLLLQGA…SAVKGALDGL (84 aa).

This sequence belongs to the papillomaviridae E2 protein family. In terms of assembly, binds DNA as homodimer. Interacts with protein E1; this interaction greatly increases E1 DNA-binding activity. Interacts with protein L1; this interaction enhances E2-dependent replication and transcription activation. Interacts with protein L2; this interaction inhibits E2 transcriptional activity but not DNA replication function E2. Interacts with protein E7; this interaction inhibits E7 oncogenic activity. Interacts with host TAF1; this interaction modulates E2-dependent transcriptional regulation. Interacts with host BRD4; this interaction mediates E2 transcriptional activation function. Additionally, the interaction with host BRD4 on mitotic chromosomes mediates tethering of the viral genome. Interacts with host TOPBP1; this interaction is required for optimal viral DNA replication. Post-translationally, phosphorylated.

Its subcellular location is the host nucleus. In terms of biological role, plays a role in the initiation of viral DNA replication. A dimer of E2 interacts with a dimer of E1 in order to improve specificity of E1 DNA binding activity. Once the complex recognizes and binds DNA at specific sites, the E2 dimer is removed from DNA. E2 also regulates viral transcription through binding to the E2RE response element (5'-ACCNNNNNNGGT-3') present in multiple copies in the regulatory regions of the viral genome. Activates or represses transcription depending on E2RE's position with regards to proximal promoter elements including the TATA-box. Repression occurs by sterically hindering the assembly of the transcription initiation complex. The chain is Regulatory protein E2 from Bos taurus (Bovine).